A 562-amino-acid polypeptide reads, in one-letter code: Formate--tetrahydrofolate ligase (562 aa).

ATP is bound at residue 71 to 78 (TPAGEGKS).

It belongs to the formate--tetrahydrofolate ligase family.

It catalyses the reaction (6S)-5,6,7,8-tetrahydrofolate + formate + ATP = (6R)-10-formyltetrahydrofolate + ADP + phosphate. Its pathway is one-carbon metabolism; tetrahydrofolate interconversion. The sequence is that of Formate--tetrahydrofolate ligase from Bacillus cereus (strain ATCC 10987 / NRS 248).